The following is a 274-amino-acid chain: Acetyl-coenzyme A carboxylase carboxyl transferase subunit beta (274 aa).

One can recognise a CoA carboxyltransferase N-terminal domain in the interval 18 to 274 (IWTKCKKCDY…FYNRQCFLKF (257 aa)). Residues C22, C25, C41, and C44 each coordinate Zn(2+). Residues 22-44 (CKKCDYILLQKDFEENLMVCPKC) form a C4-type zinc finger.

Belongs to the AccD/PCCB family. Acetyl-CoA carboxylase is a heterohexamer composed of biotin carboxyl carrier protein (AccB), biotin carboxylase (AccC) and two subunits each of ACCase subunit alpha (AccA) and ACCase subunit beta (AccD). Requires Zn(2+) as cofactor.

The protein resides in the cytoplasm. It catalyses the reaction N(6)-carboxybiotinyl-L-lysyl-[protein] + acetyl-CoA = N(6)-biotinyl-L-lysyl-[protein] + malonyl-CoA. Its pathway is lipid metabolism; malonyl-CoA biosynthesis; malonyl-CoA from acetyl-CoA: step 1/1. Functionally, component of the acetyl coenzyme A carboxylase (ACC) complex. Biotin carboxylase (BC) catalyzes the carboxylation of biotin on its carrier protein (BCCP) and then the CO(2) group is transferred by the transcarboxylase to acetyl-CoA to form malonyl-CoA. This is Acetyl-coenzyme A carboxylase carboxyl transferase subunit beta from Endomicrobium trichonymphae.